The sequence spans 177 residues: ATP synthase subunit delta (177 aa).

This sequence belongs to the ATPase delta chain family. F-type ATPases have 2 components, F(1) - the catalytic core - and F(0) - the membrane proton channel. F(1) has five subunits: alpha(3), beta(3), gamma(1), delta(1), epsilon(1). F(0) has three main subunits: a(1), b(2) and c(10-14). The alpha and beta chains form an alternating ring which encloses part of the gamma chain. F(1) is attached to F(0) by a central stalk formed by the gamma and epsilon chains, while a peripheral stalk is formed by the delta and b chains.

The protein localises to the cell inner membrane. Its function is as follows. F(1)F(0) ATP synthase produces ATP from ADP in the presence of a proton or sodium gradient. F-type ATPases consist of two structural domains, F(1) containing the extramembraneous catalytic core and F(0) containing the membrane proton channel, linked together by a central stalk and a peripheral stalk. During catalysis, ATP synthesis in the catalytic domain of F(1) is coupled via a rotary mechanism of the central stalk subunits to proton translocation. In terms of biological role, this protein is part of the stalk that links CF(0) to CF(1). It either transmits conformational changes from CF(0) to CF(1) or is implicated in proton conduction. The polypeptide is ATP synthase subunit delta (Haemophilus influenzae (strain PittEE)).